Consider the following 287-residue polypeptide: Pyridoxal kinase PdxY (287 aa).

Residues Ser9 and 44-45 (TQ) each bind substrate. ATP-binding residues include Asp111, Glu147, and Lys180. Asp221 is a binding site for substrate.

The protein belongs to the pyridoxine kinase family. PdxY subfamily. As to quaternary structure, homodimer. Requires Mg(2+) as cofactor.

The enzyme catalyses pyridoxal + ATP = pyridoxal 5'-phosphate + ADP + H(+). The protein operates within cofactor metabolism; pyridoxal 5'-phosphate salvage; pyridoxal 5'-phosphate from pyridoxal: step 1/1. In terms of biological role, pyridoxal kinase involved in the salvage pathway of pyridoxal 5'-phosphate (PLP). Catalyzes the phosphorylation of pyridoxal to PLP. This chain is Pyridoxal kinase PdxY, found in Paraburkholderia phymatum (strain DSM 17167 / CIP 108236 / LMG 21445 / STM815) (Burkholderia phymatum).